A 569-amino-acid polypeptide reads, in one-letter code: Urease subunit alpha (569 aa).

One can recognise a Urease domain in the interval 131-569 (GGFDAHIHFI…LPLAQRYFMY (439 aa)). Residues His136, His138, and Lys219 each contribute to the Ni(2+) site. Lys219 is subject to N6-carboxylysine. His221 contributes to the substrate binding site. The Ni(2+) site is built by His248 and His274. Residue His322 is the Proton donor of the active site. Residue Asp362 participates in Ni(2+) binding.

It belongs to the metallo-dependent hydrolases superfamily. Urease alpha subunit family. As to quaternary structure, heterotrimer of UreA (gamma), UreB (beta) and UreC (alpha) subunits. Three heterotrimers associate to form the active enzyme. Ni cation is required as a cofactor. Carboxylation allows a single lysine to coordinate two nickel ions.

The protein resides in the cytoplasm. It carries out the reaction urea + 2 H2O + H(+) = hydrogencarbonate + 2 NH4(+). Its pathway is nitrogen metabolism; urea degradation; CO(2) and NH(3) from urea (urease route): step 1/1. The sequence is that of Urease subunit alpha from Jannaschia sp. (strain CCS1).